The chain runs to 509 residues: Protein OS-9 homolog (509 aa).

An N-terminal signal peptide occupies residues 1-23 (MRRQSRIVASLLVLACASSGAFA). Over residues 64–74 (SPDLNDISEQT) the composition is skewed to polar residues. The interval 64–91 (SPDLNDISEQTPLKDESEESIRDGSSGE) is disordered. Over residues 75–91 (PLKDESEESIRDGSSGE) the composition is skewed to basic and acidic residues. N-linked (GlcNAc...) asparagine glycosylation occurs at asparagine 120. The MRH domain maps to 151-291 (GKCLYYISGW…LIYTPRLCND (141 aa)). Cysteines 153 and 166 form a disulfide. The a mannooligosaccharide derivative site is built by tryptophan 160, tryptophan 161, glutamine 173, aspartate 246, arginine 252, glutamate 273, and tyrosine 279. Disulfide bonds link cysteine 245/cysteine 277 and cysteine 260/cysteine 289. The disordered stretch occupies residues 433–509 (GVVDTDEDEE…GSEEIFKDEL (77 aa)). The segment covering 436–451 (DTDEDEEDGYENEEGE) has biased composition (acidic residues). A compositionally biased stretch (basic and acidic residues) spans 452 to 461 (TDKREQRENT). The segment covering 489–502 (RSEDGEDPDVDGSE) has biased composition (acidic residues). Positions 506–509 (KDEL) match the Prevents secretion from ER motif.

The protein belongs to the OS-9 family. Interacts with missfolded ER lumenal proteins.

The protein resides in the endoplasmic reticulum membrane. Functionally, lectin involved in the quality control of the secretory pathway. As a member of the endoplasmic reticulum-associated degradation lumenal (ERAD-L) surveillance system, targets misfolded endoplasmic reticulum lumenal glycoproteins for degradation. In Emericella nidulans (strain FGSC A4 / ATCC 38163 / CBS 112.46 / NRRL 194 / M139) (Aspergillus nidulans), this protein is Protein OS-9 homolog (yos9).